We begin with the raw amino-acid sequence, 93 residues long: Defensin 5 (93 aa).

A signal peptide spans 1–19; that stretch reads MKKLVLLSALVLLALQVEA. Residues 20–58 constitute a propeptide that is removed on maturation; that stretch reads EPTPKTDEGTKTDEQPGKEDQVVSVSIEGQGDPAFQDAV. 3 disulfides stabilise this stretch: C64–C92, C66–C81, and C71–C91.

The protein belongs to the alpha-defensin family. Small intestine. Not present in heart, liver, spleen, kidney, large intestine and colon.

It localises to the secreted. Its function is as follows. Probably contributes to the antimicrobial barrier function of the small intestine. This chain is Defensin 5, found in Rattus norvegicus (Rat).